The chain runs to 354 residues: Fructose-bisphosphate aldolase 2 (354 aa).

S50 lines the D-glyceraldehyde 3-phosphate pocket. The Proton donor role is filled by D83. Zn(2+)-binding residues include H84, D105, E142, and H198. G199 serves as a coordination point for dihydroxyacetone phosphate. Zn(2+) is bound at residue H232. Dihydroxyacetone phosphate is bound by residues 233–235 (GSS) and 275–278 (NIDT).

The protein belongs to the class II fructose-bisphosphate aldolase family. In terms of assembly, homodimer. The cofactor is Zn(2+).

It carries out the reaction beta-D-fructose 1,6-bisphosphate = D-glyceraldehyde 3-phosphate + dihydroxyacetone phosphate. Its pathway is carbohydrate biosynthesis; Calvin cycle. It functions in the pathway carbohydrate degradation; glycolysis; D-glyceraldehyde 3-phosphate and glycerone phosphate from D-glucose: step 4/4. Catalyzes the aldol condensation of dihydroxyacetone phosphate (DHAP or glycerone-phosphate) with glyceraldehyde 3-phosphate (G3P) to form fructose 1,6-bisphosphate (FBP) in gluconeogenesis and the reverse reaction in glycolysis. The polypeptide is Fructose-bisphosphate aldolase 2 (cfxB) (Cereibacter sphaeroides (Rhodobacter sphaeroides)).